The following is a 101-amino-acid chain: Urease subunit beta (101 aa).

The protein belongs to the urease beta subunit family. In terms of assembly, heterotrimer of UreA (gamma), UreB (beta) and UreC (alpha) subunits. Three heterotrimers associate to form the active enzyme.

The protein localises to the cytoplasm. The enzyme catalyses urea + 2 H2O + H(+) = hydrogencarbonate + 2 NH4(+). The protein operates within nitrogen metabolism; urea degradation; CO(2) and NH(3) from urea (urease route): step 1/1. The chain is Urease subunit beta from Sinorhizobium medicae (strain WSM419) (Ensifer medicae).